Here is a 527-residue protein sequence, read N- to C-terminus: FAD-dependent monooxygenase CTB5 (527 aa).

Positions 78–255 (SDLHPSCIAL…TAVTLKTFGQ (178 aa)) constitute an FAD-binding PCMH-type domain.

It belongs to the oxygen-dependent FAD-linked oxidoreductase family.

It functions in the pathway mycotoxin biosynthesis. Functionally, FAD-dependent monooxygenase; part of the gene cluster that mediates the biosynthesis of cercosporin, a light-activated, non-host-selective toxin. The perylenequinone chromophore of cercosporin absorbs light energy to attain an electronically-activated triplet state and produces active oxygen species such as the hydroxyl radical, superoxide, hydrogen peroxide or singlet oxygen upon reaction with oxygen molecules. These reactive oxygen species cause damage to various cellular components including lipids, proteins and nucleic acids. The first step of cercosporin biosynthesis is performed by the polyketide synthase CTB1 which catalyzes the formation of nor-toralactone. The starter unit acyltransferase (SAT) domain of CTB1 initiates polyketide extension by the selective utilization of acetyl-CoA, which is elongated to the heptaketide in the beta-ketoacyl synthase (KS) domain by successive condensations with six malonyl units introduced by the malonyl acyltransferase (MAT) domain. The product template (PT) domain catalyzes C4-C9 and C2-C11 aldol cyclizations and dehydrations to a trihydroxynaphthalene, which is thought to be delivered to the thioesterase (TE) domain for product release. The bifunctional enzyme CTB3 then methylates nor-toralactone to toralactone before conducting an unusual oxidative aromatic ring opening. The O-methyltransferase CTB2 further methylates the nascent OH-6 of the CBT3 product, blocking further oxidation at this site before the reductase CTB6 reduces the 2-oxopropyl ketone at position C7, giving naphthalene. The FAD-dependent monooxygenase CTB5 in concert with the multicopper oxidase CTB12 are responsible for homodimerization of naphthalene with CTB7 installing the dioxepine moiety, finally producing cercosporin. The fasciclin domain-containing protein CTB11 might act with CTB5 and CTB12 whereas the roles of CTB9 and CTB10 have still to be elucidated. This chain is FAD-dependent monooxygenase CTB5, found in Cercospora beticola (Sugarbeet leaf spot fungus).